A 559-amino-acid chain; its full sequence is Large neutral amino acids transporter small subunit 3 (559 aa).

The chain crosses the membrane as a helical span at residues 20 to 40; it reads VLENLFFSAVLLGWGSLLIIL. Asn57 is a glycosylation site (N-linked (GlcNAc...) asparagine). Transmembrane regions (helical) follow at residues 78 to 98, 105 to 124, 131 to 151, 168 to 188, and 191 to 211; these read LGFTIGSFVLSATTLPLGILM, PVRLVGSACFTASCTLMALA, LSPLIFLALSLNGFGGICLTF, MALMIGSYASSAITFPGIKLI, and AGVAFVVIMFTWSGLACLIFL. N-linked (GlcNAc...) asparagine glycans are attached at residues Asn212 and Asn229. 3 positions are modified to phosphoserine: Ser237, Ser262, and Ser267. 6 consecutive transmembrane segments (helical) span residues 304-324, 357-377, 419-439, 446-466, 485-505, and 510-530; these read FLWSLLTMGMTQLRIIFYMAA, SVFGAMQLLCLLTCPLIGYIM, AISAFTLTNLLLVGFGITCLI, FVTFVLHTIVRGFFHSACGSL, LISAVFALLQQPLFMAMVGPL, and FWVNLGLLLFSLLGFLLPSYL.

Belongs to the SLC43A transporter (TC 2.A.1.44) family. In terms of tissue distribution, ubiquitously expressed in fetus and adult. Highest expression in adult pancreas, liver, skeletal muscle. In fetus, highest expression in liver and lower levels in kidney, and lung. Exclusively expressed in the glomeruli along the glomerular capillary walls.

The protein resides in the cell membrane. It is found in the apical cell membrane. It localises to the endoplasmic reticulum membrane. The catalysed reaction is D-leucine(in) = D-leucine(out). The enzyme catalyses L-leucine(in) = L-leucine(out). It carries out the reaction L-isoleucine(in) = L-isoleucine(out). It catalyses the reaction L-methionine(in) = L-methionine(out). The catalysed reaction is L-phenylalanine(in) = L-phenylalanine(out). The enzyme catalyses L-valine(in) = L-valine(out). Its function is as follows. Uniport that mediates the transport of neutral amino acids such as L-leucine, L-isoleucine, L-valine, and L-phenylalanine. The transport activity is sodium ions-independent, electroneutral and mediated by a facilitated diffusion. This is Large neutral amino acids transporter small subunit 3 from Homo sapiens (Human).